A 148-amino-acid polypeptide reads, in one-letter code: NADPH-dependent 7-cyano-7-deazaguanine reductase (148 aa).

The active-site Thioimide intermediate is Cys50. Asp57 functions as the Proton donor in the catalytic mechanism. Residues 72–74 and 91–92 each bind substrate; these read VES and HE.

The protein belongs to the GTP cyclohydrolase I family. QueF type 1 subfamily.

Its subcellular location is the cytoplasm. The catalysed reaction is 7-aminomethyl-7-carbaguanine + 2 NADP(+) = 7-cyano-7-deazaguanine + 2 NADPH + 3 H(+). Its pathway is tRNA modification; tRNA-queuosine biosynthesis. Catalyzes the NADPH-dependent reduction of 7-cyano-7-deazaguanine (preQ0) to 7-aminomethyl-7-deazaguanine (preQ1). The polypeptide is NADPH-dependent 7-cyano-7-deazaguanine reductase (Helicobacter pylori (strain HPAG1)).